The primary structure comprises 86 residues: Cell division topological specificity factor (86 aa).

This sequence belongs to the MinE family.

Prevents the cell division inhibition by proteins MinC and MinD at internal division sites while permitting inhibition at polar sites. This ensures cell division at the proper site by restricting the formation of a division septum at the midpoint of the long axis of the cell. This chain is Cell division topological specificity factor, found in Polaromonas sp. (strain JS666 / ATCC BAA-500).